The following is a 339-amino-acid chain: Sulfate/thiosulfate import ATP-binding protein CysA (339 aa).

Residues Ile3 to Val237 enclose the ABC transporter domain. Gly35–Thr42 is a binding site for ATP.

It belongs to the ABC transporter superfamily. Sulfate/tungstate importer (TC 3.A.1.6) family. As to quaternary structure, the complex is composed of two ATP-binding proteins (CysA), two transmembrane proteins (CysT and CysW) and a solute-binding protein (CysP).

It localises to the cell inner membrane. It carries out the reaction sulfate(out) + ATP + H2O = sulfate(in) + ADP + phosphate + H(+). The enzyme catalyses thiosulfate(out) + ATP + H2O = thiosulfate(in) + ADP + phosphate + H(+). Part of the ABC transporter complex CysAWTP involved in sulfate/thiosulfate import. Responsible for energy coupling to the transport system. The protein is Sulfate/thiosulfate import ATP-binding protein CysA of Caulobacter vibrioides (strain ATCC 19089 / CIP 103742 / CB 15) (Caulobacter crescentus).